A 429-amino-acid polypeptide reads, in one-letter code: Methylenetetrahydrofolate--tRNA-(uracil-5-)-methyltransferase TrmFO (429 aa).

Residue 7–12 (GAGLAG) coordinates FAD.

This sequence belongs to the MnmG family. TrmFO subfamily. FAD serves as cofactor.

The protein localises to the cytoplasm. It carries out the reaction uridine(54) in tRNA + (6R)-5,10-methylene-5,6,7,8-tetrahydrofolate + NADH + H(+) = 5-methyluridine(54) in tRNA + (6S)-5,6,7,8-tetrahydrofolate + NAD(+). The enzyme catalyses uridine(54) in tRNA + (6R)-5,10-methylene-5,6,7,8-tetrahydrofolate + NADPH + H(+) = 5-methyluridine(54) in tRNA + (6S)-5,6,7,8-tetrahydrofolate + NADP(+). Its function is as follows. Catalyzes the folate-dependent formation of 5-methyl-uridine at position 54 (M-5-U54) in all tRNAs. This Thermosipho melanesiensis (strain DSM 12029 / CIP 104789 / BI429) protein is Methylenetetrahydrofolate--tRNA-(uracil-5-)-methyltransferase TrmFO.